The following is a 322-amino-acid chain: Sideroflexin fsf1 (322 aa).

Helical transmembrane passes span 143–163, 175–195, 229–249, and 269–289; these read SYIY…KIVP, VLGR…NVFL, TALS…LVLM, and LGLI…VFPA.

The protein belongs to the sideroflexin family.

The protein localises to the mitochondrion membrane. Mitochondrial amino-acid transporter that mediates transport of serine into mitochondria. The sequence is that of Sideroflexin fsf1 from Schizosaccharomyces pombe (strain 972 / ATCC 24843) (Fission yeast).